The primary structure comprises 454 residues: Probable mitochondrial saccharopine dehydrogenase-like oxidoreductase At5g39410 (454 aa).

Met-1 is modified (N-acetylmethionine). The segment at 215–234 (RRSRPRRPRPTICGPPAKGP) is disordered.

This sequence belongs to the saccharopine dehydrogenase family.

Its subcellular location is the mitochondrion membrane. The sequence is that of Probable mitochondrial saccharopine dehydrogenase-like oxidoreductase At5g39410 from Arabidopsis thaliana (Mouse-ear cress).